The following is a 318-amino-acid chain: Ethyl acetate hydrolase (318 aa).

Catalysis depends on residues Ser165, Asp261, and His291.

Belongs to the 'GDXG' lipolytic enzyme family. Monomer.

It is found in the cytoplasm. The catalysed reaction is ethyl acetate + H2O = ethanol + acetate + H(+). With respect to regulation, inhibited by the serine protease inhibitor phenylmethylsulfonyl fluoride, the histidine reagent diethylpyrocarbonate and two sulfhydryl reagents, mercuric chloride and naphthol AS-D chloroacetate. Not inhibited by EDTA. In terms of biological role, esterase that catalyzes the hydrolysis of ethyl acetate. Can also use propyl acetate and the chromogenic substrates alpha-naphthyl acetate, alpha-naphthyl propionate, alpha-naphthyl caproate and 4-nitrophenyl acetate, with a preference for short-chain aliphatic esters. Highest activity is obtained in vitro with propyl acetate, followed by ethyl acetate. In vivo, could be involved in pyoverdine biosynthesis, but its specific role and its in vivo substrate have not been identified. This is Ethyl acetate hydrolase from Pseudomonas putida (Arthrobacter siderocapsulatus).